A 252-amino-acid polypeptide reads, in one-letter code: uncharacterized protein (252 aa).

Belongs to the GSP E family.

This is an uncharacterized protein from Methanocaldococcus jannaschii (strain ATCC 43067 / DSM 2661 / JAL-1 / JCM 10045 / NBRC 100440) (Methanococcus jannaschii).